Consider the following 123-residue polypeptide: Small ribosomal subunit protein uS12 (123 aa).

Aspartate 89 is subject to 3-methylthioaspartic acid.

It belongs to the universal ribosomal protein uS12 family. In terms of assembly, part of the 30S ribosomal subunit. Contacts proteins S8 and S17. May interact with IF1 in the 30S initiation complex.

In terms of biological role, with S4 and S5 plays an important role in translational accuracy. Its function is as follows. Interacts with and stabilizes bases of the 16S rRNA that are involved in tRNA selection in the A site and with the mRNA backbone. Located at the interface of the 30S and 50S subunits, it traverses the body of the 30S subunit contacting proteins on the other side and probably holding the rRNA structure together. The combined cluster of proteins S8, S12 and S17 appears to hold together the shoulder and platform of the 30S subunit. The sequence is that of Small ribosomal subunit protein uS12 from Bifidobacterium animalis subsp. lactis (strain AD011).